We begin with the raw amino-acid sequence, 252 residues long: Small ribosomal subunit protein uS3 (252 aa).

Residues 16 to 85 (IDEYLETKLE…NPQVEVKEVD (70 aa)) form the KH type-2 domain. Residues 233 to 252 (EESEIEEITEEIEDVETLEE) form a disordered region.

This sequence belongs to the universal ribosomal protein uS3 family. As to quaternary structure, part of the 30S ribosomal subunit.

Functionally, binds the lower part of the 30S subunit head. This Methanosphaera stadtmanae (strain ATCC 43021 / DSM 3091 / JCM 11832 / MCB-3) protein is Small ribosomal subunit protein uS3.